The following is a 484-amino-acid chain: MIAPDKVHYHVPEMRRIKNIHFVGIGGAGMGGIAEVLLNEGYQVSGSDRQANGMTDRLSGLGATIFFGHQASNVEKANVVVVSSAIDPTNPEVNAANEMRIPVIRRAEMLAELMRFRHGIAIAGTHGKTTTTSLIATIFAQAELDPTFVIGGLLNSAGTNARLGSSQYLIAEADESDASFVHLQPMVSVVTNIEPDHMETYQGDFQKMQDTYIDFLHNLPFYGLAVLCIDDPVITQLLPRIKRKYLTYGYSEVADVRATHVKHTFNQSEFTLKRKDHQDIQVVVNAPGKHNVLNALAAIAVATDENIEDAAITAALANFSGIGRRFEMLGEFATGEGDVLLVDDYGHHPTEVEATIAVARNNWPDRRLVMAYQPHRYSRTRDLYEDFVRVLSQVDVLLLLDVYSAGEEKIEGADSKSLCRSMRQRGQLEPIYVADKNELPKLLADNLKDQDILLTQGAGNIGQIAKELQEMKLDKGALRTGWSK.

124 to 130 is an ATP binding site; sequence GTHGKTT.

The protein belongs to the MurCDEF family.

Its subcellular location is the cytoplasm. It catalyses the reaction UDP-N-acetyl-alpha-D-muramate + L-alanine + ATP = UDP-N-acetyl-alpha-D-muramoyl-L-alanine + ADP + phosphate + H(+). It participates in cell wall biogenesis; peptidoglycan biosynthesis. In terms of biological role, cell wall formation. In Pseudoalteromonas atlantica (strain T6c / ATCC BAA-1087), this protein is UDP-N-acetylmuramate--L-alanine ligase.